Here is a 162-residue protein sequence, read N- to C-terminus: NADH-ubiquinone oxidoreductase chain 6 (162 aa).

4 helical membrane-spanning segments follow: residues 1–21 (MIFYTVLVLMFLGSTLVFYSL), 46–66 (FSFIALVLILIYVGGMLVVFV), 84–104 (EILVLSSLVISWGVLNFDPLI), and 130–150 (GGYLLIGGYILLVALVVALVL).

The protein belongs to the complex I subunit 6 family.

It localises to the mitochondrion membrane. The enzyme catalyses a ubiquinone + NADH + 5 H(+)(in) = a ubiquinol + NAD(+) + 4 H(+)(out). Core subunit of the mitochondrial membrane respiratory chain NADH dehydrogenase (Complex I) that is believed to belong to the minimal assembly required for catalysis. Complex I functions in the transfer of electrons from NADH to the respiratory chain. The immediate electron acceptor for the enzyme is believed to be ubiquinone. The polypeptide is NADH-ubiquinone oxidoreductase chain 6 (ND6) (Patiria pectinifera (Starfish)).